A 1482-amino-acid chain; its full sequence is Cystic fibrosis transmembrane conductance regulator (1482 aa).

Residues M1–F77 lie on the Cytoplasmic side of the membrane. A helical transmembrane segment spans residues F78 to Q98. An ABC transmembrane type-1 1 domain is found at F81–L365. Residues P99–Y122 are Extracellular-facing. Residues L123–H146 form a helical membrane-spanning segment. The Cytoplasmic portion of the chain corresponds to H147–L195. A helical membrane pass occupies residues A196–W216. Topologically, residues D217–S222 are extracellular. The chain crosses the membrane as a helical span at residues A223–M243. The Cytoplasmic portion of the chain corresponds to M244–K298. The chain crosses the membrane as a helical span at residues A299–F319. The Extracellular segment spans residues L320 to T339. A helical transmembrane segment spans residues I340–V358. The Cytoplasmic portion of the chain corresponds to Q359 to S858. ATP-binding positions include W401, S434, G458–T465, and Q493. The ABC transporter 1 domain maps to N423 to G646. A lipid anchor (S-palmitoyl cysteine) is attached at C524. Residues S549 and S660 each carry the phosphoserine modification. Positions S654 to E831 are disordered R region. S670 is modified (phosphoserine; by PKA). S685 carries the post-translational modification Phosphoserine. A Glycyl lysine isopeptide (Lys-Gly) (interchain with G-Cter in ubiquitin) cross-link involves residue K687. A phosphoserine mark is found at S699 and S711. A Phosphothreonine modification is found at T716. A phosphoserine mark is found at S736, S767, S790, S795, and S813. The chain crosses the membrane as a helical span at residues L859–V879. Residues L859–S1156 enclose the ABC transmembrane type-1 2 domain. The Extracellular segment spans residues V880–I919. N-linked (GlcNAc...) asparagine glycans are attached at residues N894, N895, N901, and N910. The chain crosses the membrane as a discontinuously helical span at residues Y920–H940. The Cytoplasmic portion of the chain corresponds to T941–T991. The chain crosses the membrane as a helical span at residues M992–L1012. The Extracellular portion of the chain corresponds to Q1013–P1014. A helical transmembrane segment spans residues Y1015 to L1035. Over H1036 to T1096 the chain is Cytoplasmic. Residues L1097–F1117 form a helical membrane-spanning segment. At V1118–G1131 the chain is on the extracellular side. A helical membrane pass occupies residues I1132–I1152. At D1153 to L1482 the chain is on the cytoplasmic side. Positions M1212–P1445 constitute an ABC transporter 2 domain. ATP contacts are provided by residues Y1221 and G1246–S1253. The tract at residues R1388–L1482 is interaction with GORASP2. C1397 is lipidated: S-palmitoyl cysteine. Positions H1454–R1463 are enriched in basic residues. The tract at residues H1454–L1482 is disordered. S1458 carries the post-translational modification Phosphoserine. Residues E1472–L1482 show a composition bias toward acidic residues. The PDZ-binding motif lies at T1480–L1482.

The protein belongs to the ABC transporter superfamily. ABCC family. CFTR transporter (TC 3.A.1.202) subfamily. In terms of assembly, monomer; does not require oligomerization for channel activity. May form oligomers in the membrane. Interacts with SLC26A3, SLC26A6 and NHERF1. Interacts with SHANK2. Interacts with MYO6. Interacts (via C-terminus) with GOPC (via PDZ domain); this promotes CFTR internalization and thereby decreases channel activity. Interacts with SLC4A7 through NHERF1. Found in a complex with MYO5B and RAB11A. Interacts with ANO1. Interacts with SLC26A8. Interacts with AHCYL1; the interaction increases CFTR activity. Interacts with CSE1L. The core-glycosylated form interacts with GORASP2 (via PDZ GRASP-type 1 domain) in respone to ER stress. Interacts with MARCHF2; the interaction leads to CFTR ubiqtuitination and degradation. Interacts with ADGRG2. N-glycosylated. Post-translationally, phosphorylated; cAMP treatment promotes phosphorylation and activates the channel. Dephosphorylation decreases the ATPase activity (in vitro). Phosphorylation at PKA sites activates the channel. Phosphorylation at PKC sites enhances the response to phosphorylation by PKA. Phosphorylated by AMPK; this inhibits channel activity. In terms of processing, ubiquitinated, leading to its degradation in the lysosome. Deubiquitination by USP10 in early endosomes enhances its endocytic recycling to the cell membrane. Ubiquitinated by RNF185 during ER stress. Ubiquitinated by MARCHF2.

The protein resides in the apical cell membrane. It is found in the early endosome membrane. The protein localises to the cell membrane. Its subcellular location is the recycling endosome membrane. It localises to the endoplasmic reticulum membrane. The protein resides in the nucleus. It catalyses the reaction ATP + H2O + closed Cl(-) channel = ADP + phosphate + open Cl(-) channel.. The enzyme catalyses chloride(in) = chloride(out). The catalysed reaction is hydrogencarbonate(in) = hydrogencarbonate(out). It carries out the reaction ATP + H2O = ADP + phosphate + H(+). Epithelial ion channel that plays an important role in the regulation of epithelial ion and water transport and fluid homeostasis. Mediates the transport of chloride ions across the cell membrane. Possesses an intrinsic ATPase activity and utilizes ATP to gate its channel; the passive flow of anions through the channel is gated by cycles of ATP binding and hydrolysis by the ATP-binding domains. The ion channel is also permeable to HCO(3)(-); selectivity depends on the extracellular chloride concentration. Exerts its function also by modulating the activity of other ion channels and transporters. Contributes to the regulation of the pH and the ion content of the epithelial fluid layer. Modulates the activity of the epithelial sodium channel (ENaC) complex, in part by regulating the cell surface expression of the ENaC complex. May regulate bicarbonate secretion and salvage in epithelial cells by regulating the transporter SLC4A7. Can inhibit the chloride channel activity of ANO1. Plays a role in the chloride and bicarbonate homeostasis during sperm epididymal maturation and capacitation. This chain is Cystic fibrosis transmembrane conductance regulator, found in Loxodonta africana (African elephant).